We begin with the raw amino-acid sequence, 520 residues long: Keratin, type II cytoskeletal 78 (520 aa).

Positions 1-110 are head; that stretch reads MSLSPCRAQR…DPQFQVVRTQ (110 aa). A coil 1A region spans residues 111-146; it reads ETQEIRTLNNQFASFIDKVRFLEQQNKVLETKWHLL. The region spanning 111-424 is the IF rod domain; sequence ETQEIRTLNN…RLLEGEECRM (314 aa). A linker 1 region spans residues 147–165; the sequence is QQQGLSGSQQGLEPVFEAC. The tract at residues 166-258 is coil 1B; that stretch reads LDQLRKQLEQ…LNEEELGQLQ (93 aa). Positions 259 to 281 are linker 12; the sequence is TQASDTSVVLSMDNNRYLDFSSI. Residues 282–421 are coil 2; sequence ITEVRARYEE…TYRRLLEGEE (140 aa). A tail region spans residues 422–520; sequence CRMSGECTSQ…ESSLKTSITY (99 aa).

It belongs to the intermediate filament family. Heterotetramer of two type I and two type II keratins. In terms of tissue distribution, in non-keratinising esophageal and vaginal epithelium, strongly expressed in the basal and parabasal/lower suprabasal cell layers with considerably decreased expression in the mid/upper suprabasal layers (at protein level). A similar gradient from basal to lower suprabasal layers is seen in the partially keratinised dorsal tongue epithelium, in the scalp and in the plantar epidermis (at protein level). Extension of expression into the suprabasal compartments is distinctly more pronounced in non-keratinising epithelia than in keratinising epithelia and epidermis (at protein level). In scalp sections, present in the interfollicular epidermis and infundibulum including the entire outer root sheath of the hair follicles and also in the sebocytes (at protein level). In sweat glands, expressed in peripheral and luminal cells of the lower duct and in peripheral cells of the middle/upper duct with no expression observed in luminal cells (at protein level). In embryos at the 14th week of pregnancy, detected in basal and parabasal layers but is absent from the uppermost epidermal layer (at protein level). Expressed in tongue epithelium.

This chain is Keratin, type II cytoskeletal 78 (KRT78), found in Homo sapiens (Human).